The primary structure comprises 847 residues: Putative membrane protein SCO5905 (847 aa).

The next 12 helical transmembrane spans lie at 18-38 (AVVV…APAL), 187-207 (GGDK…LLAI), 215-235 (LVPL…GAIL), 248-268 (ASIM…IITA), 302-322 (IVLA…GFGP), 326-346 (LGVA…VLLL), 381-401 (VKVA…LLGY), 539-559 (DTTL…VLLL), 562-582 (LLAP…TLGA), 600-620 (VTAY…IFIM), 643-663 (TGGV…VLMT), and 672-692 (FGFA…PLLV). A disordered region spans residues 708–729 (RPGTPQTPSTPTSEPPSADAPA). Helical transmembrane passes span 744-764 (FTWI…GMYL), 778-798 (FGTL…LVAI), and 808-828 (TIFA…EIWA).

It belongs to the resistance-nodulation-cell division (RND) (TC 2.A.6) family. MmpL subfamily.

It is found in the cell membrane. The chain is Putative membrane protein SCO5905 from Streptomyces coelicolor (strain ATCC BAA-471 / A3(2) / M145).